A 108-amino-acid polypeptide reads, in one-letter code: MAKKKTNEQPSVKEVPKPAEGEVICVVKKMLGAEHVQVICLDGKERLGRIPGKMKKKMWVKEGDVVLAAPWDFQPNKCDIIYKYSESEVRRLEEEQVVSADIIEQLRG.

Residues 11–85 (SVKEVPKPAE…NKCDIIYKYS (75 aa)) enclose the S1-like domain.

Belongs to the eIF-1A family.

Its function is as follows. Seems to be required for maximal rate of protein biosynthesis. Enhances ribosome dissociation into subunits and stabilizes the binding of the initiator Met-tRNA(I) to 40 S ribosomal subunits. This Sulfurisphaera tokodaii (strain DSM 16993 / JCM 10545 / NBRC 100140 / 7) (Sulfolobus tokodaii) protein is Translation initiation factor 1A (eIF1A).